Consider the following 793-residue polypeptide: Kinesin-associated protein 3 (793 aa).

Serine 60 is modified (phosphoserine). A compositionally biased stretch (basic and acidic residues) spans 103 to 119 (LPGKEKKEKSSKPKDPP). The interval 103–123 (LPGKEKKEKSSKPKDPPPFEG) is disordered. 5 ARM repeats span residues 333–373 (FMEN…NLSF), 374–412 (DTGLRNKMVQVGLLPKLTALLGNENYKQIAMCVLYHISM), 494–533 (DGPTKNLFIDYVGDLAAQISSDEEEEFVIECLGTLANLTI), 578–620 (DDSC…QMVF), and 621–662 (HQAT…IIAE).

As to quaternary structure, interacts with SMC3 subunit of the cohesin complex. Heterotrimer of KIFAP3, KIF3A and KIF3B. Interacts with RAP1GDS1/SMG GDS. In terms of processing, phosphorylated on tyrosine residues by SRC in vitro; this reduces the binding affinity of the protein for RAP1GDS1.

Its function is as follows. Involved in tethering the chromosomes to the spindle pole and in chromosome movement. Binds to the tail domain of the KIF3A/KIF3B heterodimer to form a heterotrimeric KIF3 complex and may regulate the membrane binding of this complex. The polypeptide is Kinesin-associated protein 3 (Kifap3) (Mus musculus (Mouse)).